The chain runs to 348 residues: Zinc-type alcohol dehydrogenase-like protein C2E1P3.01 (348 aa).

Belongs to the zinc-containing alcohol dehydrogenase family. Quinone oxidoreductase subfamily.

It localises to the mitochondrion. The sequence is that of Zinc-type alcohol dehydrogenase-like protein C2E1P3.01 from Schizosaccharomyces pombe (strain 972 / ATCC 24843) (Fission yeast).